The primary structure comprises 183 residues: uncharacterized protein (183 aa).

The first 29 residues, 1–29 (MQCWQQPFLRFLQQPFFLATASLAGSSSS), serve as a signal peptide directing secretion. Residues 149–183 (PGSTCDGSLKGRAYPSCVPKRDPEHSREESHPLSG) are disordered. Residues 167-183 (PKRDPEHSREESHPLSG) are compositionally biased toward basic and acidic residues.

The protein resides in the secreted. This is an uncharacterized protein from Homo sapiens (Human).